Here is an 843-residue protein sequence, read N- to C-terminus: Leucine--tRNA ligase (843 aa).

Residues 61–71 (PYPSGDLHMGH) carry the 'HIGH' region motif. A 'KMSKS' region motif is present at residues 606 to 610 (AMSKS). Lys609 contributes to the ATP binding site.

This sequence belongs to the class-I aminoacyl-tRNA synthetase family.

The protein localises to the cytoplasm. The catalysed reaction is tRNA(Leu) + L-leucine + ATP = L-leucyl-tRNA(Leu) + AMP + diphosphate. The polypeptide is Leucine--tRNA ligase (Arthrobacter sp. (strain FB24)).